The chain runs to 82 residues: Immediate early response 3-interacting protein 1 (82 aa).

Transmembrane regions (helical) follow at residues 2-22 (AFTL…IAVL) and 62-82 (VMRV…LLFG).

It belongs to the YOS1 family.

It localises to the endoplasmic reticulum membrane. Its function is as follows. Regulator of endoplasmic reticulum secretion that acts as a key determinant of brain size. Required for secretion of extracellular matrix proteins. Required for correct brain development by depositing sufficient extracellular matrix proteins for tissue integrity and the proliferation of neural progenitors. Acts as a regulator of the unfolded protein response (UPR). This chain is Immediate early response 3-interacting protein 1, found in Rattus norvegicus (Rat).